The chain runs to 309 residues: Porphobilinogen deaminase (309 aa).

At cysteine 241 the chain carries S-(dipyrrolylmethanemethyl)cysteine.

This sequence belongs to the HMBS family. Monomer. Dipyrromethane is required as a cofactor.

The catalysed reaction is 4 porphobilinogen + H2O = hydroxymethylbilane + 4 NH4(+). Its pathway is porphyrin-containing compound metabolism; protoporphyrin-IX biosynthesis; coproporphyrinogen-III from 5-aminolevulinate: step 2/4. Tetrapolymerization of the monopyrrole PBG into the hydroxymethylbilane pre-uroporphyrinogen in several discrete steps. This Bacillus cereus (strain ATCC 10987 / NRS 248) protein is Porphobilinogen deaminase.